The following is a 381-amino-acid chain: Probable 26S proteasome regulatory subunit rpn9 (381 aa).

In terms of domain architecture, PCI spans 177–343; the sequence is QYYRHCLLYL…QIVTISSVQS (167 aa).

The protein belongs to the proteasome subunit S11 family.

Functionally, acts as a regulatory subunit of the 26S proteasome which is involved in the ATP-dependent degradation of ubiquitinated proteins. This chain is Probable 26S proteasome regulatory subunit rpn9 (rpn9), found in Schizosaccharomyces pombe (strain 972 / ATCC 24843) (Fission yeast).